The following is a 477-amino-acid chain: ATP synthase subunit beta (477 aa).

148–155 (GGAGVGKT) provides a ligand contact to ATP.

The protein belongs to the ATPase alpha/beta chains family. F-type ATPases have 2 components, CF(1) - the catalytic core - and CF(0) - the membrane proton channel. CF(1) has five subunits: alpha(3), beta(3), gamma(1), delta(1), epsilon(1). CF(0) has three main subunits: a(1), b(2) and c(9-12). The alpha and beta chains form an alternating ring which encloses part of the gamma chain. CF(1) is attached to CF(0) by a central stalk formed by the gamma and epsilon chains, while a peripheral stalk is formed by the delta and b chains.

It localises to the cell inner membrane. The catalysed reaction is ATP + H2O + 4 H(+)(in) = ADP + phosphate + 5 H(+)(out). Functionally, produces ATP from ADP in the presence of a proton gradient across the membrane. The catalytic sites are hosted primarily by the beta subunits. This chain is ATP synthase subunit beta, found in Psychrobacter arcticus (strain DSM 17307 / VKM B-2377 / 273-4).